A 184-amino-acid polypeptide reads, in one-letter code: MNWRSEHIWIELITGSRKTSNFCWACILFLGSLGFLVVGTSSYLGKNLISVFPSQQILFFPQGIVMSFYGIAGLFISSYLWCTISWNVGSGYDRFDRKEGIMSLFRWGFPGRDRRIFLRFFLKDIQSIRMEVREGLFPRRVLYMEIKGQGAIPLTRTDEDLTPREIEQKAAELAYFLRVPIEVF.

The next 2 helical transmembrane spans lie at 22–42 and 57–77; these read FCWA…GTSS and ILFF…LFIS.

Belongs to the Ycf4 family.

The protein localises to the plastid. It localises to the chloroplast thylakoid membrane. Functionally, seems to be required for the assembly of the photosystem I complex. This chain is Photosystem I assembly protein Ycf4, found in Phalaenopsis aphrodite subsp. formosana (Moth orchid).